A 1015-amino-acid polypeptide reads, in one-letter code: Probable beta-galactosidase B (1015 aa).

The N-terminal stretch at M1 to A20 is a signal peptide. An N-linked (GlcNAc...) asparagine glycan is attached at N23. Y90 provides a ligand contact to substrate. N99 and N100 each carry an N-linked (GlcNAc...) asparagine glycan. Residues N135, A136, and E137 each contribute to the substrate site. An N-linked (GlcNAc...) asparagine glycan is attached at N172. Substrate is bound at residue N195. E196 functions as the Proton donor in the catalytic mechanism. N-linked (GlcNAc...) asparagine glycosylation occurs at N211. Y265 contributes to the substrate binding site. The cysteines at positions 271 and 324 are disulfide-linked. The active-site Nucleophile is the E308. Y373 provides a ligand contact to substrate. Residues N411, N456, N554, N679, N735, N775, and N821 are each glycosylated (N-linked (GlcNAc...) asparagine).

It belongs to the glycosyl hydrolase 35 family.

It localises to the secreted. It carries out the reaction Hydrolysis of terminal non-reducing beta-D-galactose residues in beta-D-galactosides.. Functionally, cleaves beta-linked terminal galactosyl residues from gangliosides, glycoproteins, and glycosaminoglycans. The chain is Probable beta-galactosidase B (lacB) from Aspergillus fumigatus (strain CBS 144.89 / FGSC A1163 / CEA10) (Neosartorya fumigata).